The chain runs to 662 residues: MINHITDNQFKLVSKYQPSGDQPQAIEQLVDNIEGGEKAQILMGATGTGKTYTMSQVISKVNKPTLVIAHNKTLAGQLYGEFKEFFPENAVEYFVSYYDYYQPEAYVPSSDTYIEKDSSVNDEIDKLRHSATSALLERNDVIVVASVSCIYGLGSPKEYADSVVSLRPGLEISRDKLLNDLVDIQFERNDIDFQRGRFRVRGDVVEIFPASRDEHAFRVEFFGDEIDRIREVEALTGQVLGEVDHLAIFPATHFVTNDDHMEVAVAKIQAELEEQLAVFEKEGKLLEAQRLKQRTEYDIEMLREMGYTNGVENYSRHMDGRSEGEPPYTLLDFFPDDFLIMIDESHMTIGQIKGMYNGDRSRKEMLVNYGFRLPSALDNRPLRREEFESHVHQIVYVSATPGDYENEQTETVIEQIIRPTGLLDPEVEVRPTMGQIDDLLGEINARVEKNERTFITTLTKKMAEDLTDYFKEMGIKVKYMHSDIKTLERTEIIRDLRLGVFDVLVGINLLREGIDVPEVSLVAILDADKEGFLRNERGLIQTIGRAARNSEGHVIMYADTVTQSMQRAIDETARRRKIQMAYNEEHGIVPQTIKKEIRDLIAVTKAVAKEEDKEVDINSLNKQERKELVKKLEKQMQEAVEVLDFELAAQIRDMMLEVKALD.

One can recognise a Helicase ATP-binding domain in the interval Asp-31–Arg-188. Residue Gly-44–Thr-51 participates in ATP binding. Residues Tyr-97–Val-120 carry the Beta-hairpin motif. Residues Gln-435–Ile-601 form the Helicase C-terminal domain. The UVR domain maps to Lys-626–Leu-661.

Belongs to the UvrB family. As to quaternary structure, forms a heterotetramer with UvrA during the search for lesions. Interacts with UvrC in an incision complex.

The protein resides in the cytoplasm. In terms of biological role, the UvrABC repair system catalyzes the recognition and processing of DNA lesions. A damage recognition complex composed of 2 UvrA and 2 UvrB subunits scans DNA for abnormalities. Upon binding of the UvrA(2)B(2) complex to a putative damaged site, the DNA wraps around one UvrB monomer. DNA wrap is dependent on ATP binding by UvrB and probably causes local melting of the DNA helix, facilitating insertion of UvrB beta-hairpin between the DNA strands. Then UvrB probes one DNA strand for the presence of a lesion. If a lesion is found the UvrA subunits dissociate and the UvrB-DNA preincision complex is formed. This complex is subsequently bound by UvrC and the second UvrB is released. If no lesion is found, the DNA wraps around the other UvrB subunit that will check the other stand for damage. The polypeptide is UvrABC system protein B (Streptococcus pneumoniae (strain P1031)).